The chain runs to 197 residues: Auxin-responsive protein IAA31 (197 aa).

2 disordered regions span residues 1 to 43 and 66 to 90; these read MENL…DQAK and SCLQ…ETQQ. An EAR-like (transcriptional repression) motif is present at residues 9–13; it reads LRLGL. Residues 99–186 enclose the PB1 domain; sequence GLFVKVSMDG…TCKRLRIMKG (88 aa).

It belongs to the Aux/IAA family. In terms of assembly, homodimers and heterodimers. Highly expressed in etiolated seedlings. Expressed in roots.

It is found in the nucleus. Functionally, aux/IAA proteins are short-lived transcriptional factors that function as repressors of early auxin response genes at low auxin concentrations. The polypeptide is Auxin-responsive protein IAA31 (IAA31) (Oryza sativa subsp. japonica (Rice)).